The chain runs to 386 residues: Cobalt-precorrin-5B C(1)-methyltransferase (386 aa).

It belongs to the CbiD family.

The enzyme catalyses Co-precorrin-5B + S-adenosyl-L-methionine = Co-precorrin-6A + S-adenosyl-L-homocysteine. Its pathway is cofactor biosynthesis; adenosylcobalamin biosynthesis; cob(II)yrinate a,c-diamide from sirohydrochlorin (anaerobic route): step 6/10. Functionally, catalyzes the methylation of C-1 in cobalt-precorrin-5B to form cobalt-precorrin-6A. The polypeptide is Cobalt-precorrin-5B C(1)-methyltransferase (Prochlorococcus marinus (strain MIT 9303)).